Consider the following 90-residue polypeptide: RNA-binding protein Hfq (90 aa).

The Sm domain occupies 9 to 68 (DPFLNALRRERVPVSIYLVNGIKLQGQVESFDQFVILLKNTVSQMVYKHAISTVVPARPF). The segment at 71-90 (TGHQNAQGGYGPQDDVPSGE) is disordered.

This sequence belongs to the Hfq family. In terms of assembly, homohexamer.

In terms of biological role, RNA chaperone that binds small regulatory RNA (sRNAs) and mRNAs to facilitate mRNA translational regulation in response to envelope stress, environmental stress and changes in metabolite concentrations. Also binds with high specificity to tRNAs. The protein is RNA-binding protein Hfq of Shewanella putrefaciens (strain CN-32 / ATCC BAA-453).